We begin with the raw amino-acid sequence, 721 residues long: Polyribonucleotide nucleotidyltransferase (721 aa).

Residues D487 and D493 each contribute to the Mg(2+) site. Residues 554–613 enclose the KH domain; that stretch reads PRIETFKIPTDKIREVIGTGGKVIREIVEKTGAKVNIDDDGTVKVASSDGESIKAAIKWI. Positions 623 to 691 constitute an S1 motif domain; that stretch reads NAIYDGTVVK…DRGKTRLSMK (69 aa). Residues 697-721 form a disordered region; that stretch reads TGEDLEAKQKAEAEKAKAEGAPAAE. Basic and acidic residues predominate over residues 701 to 714; that stretch reads LEAKQKAEAEKAKA.

This sequence belongs to the polyribonucleotide nucleotidyltransferase family. Requires Mg(2+) as cofactor.

It is found in the cytoplasm. The catalysed reaction is RNA(n+1) + phosphate = RNA(n) + a ribonucleoside 5'-diphosphate. Involved in mRNA degradation. Catalyzes the phosphorolysis of single-stranded polyribonucleotides processively in the 3'- to 5'-direction. This is Polyribonucleotide nucleotidyltransferase from Rhodopseudomonas palustris (strain BisA53).